The chain runs to 179 residues: Tetratricopeptide repeat protein 36 (179 aa).

TPR repeat units follow at residues 43-76 (SSQL…CPLN), 77-110 (PSAY…AGPK), and 115-148 (CQAY…GSSF).

The protein belongs to the TTC36 family.

The sequence is that of Tetratricopeptide repeat protein 36 from Caenorhabditis briggsae.